The following is a 682-amino-acid chain: DNA-directed RNA polymerase subunit beta' (682 aa).

Positions 69, 71, 87, and 90 each coordinate Zn(2+). Residues Asp-489, Asp-491, and Asp-493 each coordinate Mg(2+).

The protein belongs to the RNA polymerase beta' chain family. RpoC1 subfamily. In plastids the minimal PEP RNA polymerase catalytic core is composed of four subunits: alpha, beta, beta', and beta''. When a (nuclear-encoded) sigma factor is associated with the core the holoenzyme is formed, which can initiate transcription. Requires Mg(2+) as cofactor. It depends on Zn(2+) as a cofactor.

The protein resides in the plastid. It is found in the chloroplast. The catalysed reaction is RNA(n) + a ribonucleoside 5'-triphosphate = RNA(n+1) + diphosphate. In terms of biological role, DNA-dependent RNA polymerase catalyzes the transcription of DNA into RNA using the four ribonucleoside triphosphates as substrates. The chain is DNA-directed RNA polymerase subunit beta' from Acorus gramineus (Dwarf sweet flag).